An 81-amino-acid chain; its full sequence is Photosystem I iron-sulfur center (81 aa).

2 4Fe-4S ferredoxin-type domains span residues 2–31 (AHAV…MIPW) and 39–68 (IASA…VRVY). The [4Fe-4S] cluster site is built by cysteine 11, cysteine 14, cysteine 17, cysteine 21, cysteine 48, cysteine 51, cysteine 54, and cysteine 58.

As to quaternary structure, the eukaryotic PSI reaction center is composed of at least 11 subunits. Requires [4Fe-4S] cluster as cofactor.

The protein resides in the plastid. Its subcellular location is the chloroplast thylakoid membrane. It carries out the reaction reduced [plastocyanin] + hnu + oxidized [2Fe-2S]-[ferredoxin] = oxidized [plastocyanin] + reduced [2Fe-2S]-[ferredoxin]. Apoprotein for the two 4Fe-4S centers FA and FB of photosystem I (PSI); essential for photochemical activity. FB is the terminal electron acceptor of PSI, donating electrons to ferredoxin. The C-terminus interacts with PsaA/B/D and helps assemble the protein into the PSI complex. Required for binding of PsaD and PsaE to PSI. PSI is a plastocyanin-ferredoxin oxidoreductase, converting photonic excitation into a charge separation, which transfers an electron from the donor P700 chlorophyll pair to the spectroscopically characterized acceptors A0, A1, FX, FA and FB in turn. In Marchantia polymorpha (Common liverwort), this protein is Photosystem I iron-sulfur center.